We begin with the raw amino-acid sequence, 1775 residues long: Internalin I (1775 aa).

The first 28 residues, 1-28, serve as a signal peptide directing secretion; the sequence is MKKKFSIVIISVLLLGYLAPFDTLLVGA. Residues 36–50 are compositionally biased toward low complexity; it reads DTTVKTAETETATEA. Residues 36–97 are disordered; that stretch reads DTTVKTAETE…SNIKTEINTD (62 aa). The segment covering 58-85 has biased composition (basic and acidic residues); the sequence is DNEKAEEPKEAEASKETTEKEEKAKTKE. 27 LRR repeats span residues 152–176, 180–201, 202–224, 225–247, 248–269, 274–295, 296–318, 319–341, 342–364, 365–386, 387–409, 410–431, 432–453, 454–475, 476–497, 498–519, 520–541, 542–563, 564–585, 586–607, 608–629, 630–650, 654–675, 682–704, 705–726, 727–748, and 749–770; these read AISQ…EGLQ, NLTS…KDLV, NLVS…EGLV, NLQE…AALP, VLKE…NPAG, ELET…AKLP, KLKN…KGAT, KLQL…SGLS, ELEM…KDLP, NLVN…NNLP, KLQT…TDMP, QLKT…DNLP, KLEK…NDLP, RLSY…KKLP, LLEW…TNFP, SLNY…TELP, SLKE…HDMP, NLRK…DNLP, KLQN…HDLP, SLET…DNLP, ELTY…GDLP, KLEI…GTMD, KLRN…GNLS, NLTE…STLS, RLIY…SNLT, TLQE…SDLD, and NLNK…ANMV. Residues 782 to 869 enclose the LRRCT domain; that stretch reads TYTLPTVLSY…SAVKVTANAE (88 aa). 3 MucBP domains span residues 1507–1566, 1572–1631, and 1641–1702; these read DAAA…EQTV, AIEP…PQTI, and SKKS…SQTV. Residues 1713–1737 are disordered; the sequence is SKDEPKVKGKTNQPPSADTKLKVDN. The LPXTG sorting signal motif lies at 1740-1744; it reads LPATG. A Pentaglycyl murein peptidoglycan amidated threonine modification is found at threonine 1743. The propeptide at 1744–1775 is removed by sortase; that stretch reads GDTENMALAVLIGFNMLLVASIFLFRKPKTNQ.

This sequence belongs to the internalin family.

It is found in the secreted. Its subcellular location is the cell wall. In terms of biological role, a role in virulence could not be demonstrated. The chain is Internalin I (inlI) from Listeria monocytogenes serotype 4b (strain F2365).